Consider the following 482-residue polypeptide: ATP synthase subunit beta, chloroplastic (482 aa).

168–175 (GGAGVGKT) serves as a coordination point for ATP.

This sequence belongs to the ATPase alpha/beta chains family. In terms of assembly, F-type ATPases have 2 components, CF(1) - the catalytic core - and CF(0) - the membrane proton channel. CF(1) has five subunits: alpha(3), beta(3), gamma(1), delta(1), epsilon(1). CF(0) has four main subunits: a(1), b(1), b'(1) and c(9-12).

It is found in the plastid. The protein localises to the chloroplast thylakoid membrane. It carries out the reaction ATP + H2O + 4 H(+)(in) = ADP + phosphate + 5 H(+)(out). In terms of biological role, produces ATP from ADP in the presence of a proton gradient across the membrane. The catalytic sites are hosted primarily by the beta subunits. This Gnetum parvifolium (Small-leaved jointfir) protein is ATP synthase subunit beta, chloroplastic.